The chain runs to 270 residues: UPF0354 protein BCAH187_A4826 (270 aa).

It belongs to the UPF0354 family.

The polypeptide is UPF0354 protein BCAH187_A4826 (Bacillus cereus (strain AH187)).